A 998-amino-acid chain; its full sequence is DNA damage-induced apoptosis suppressor protein (998 aa).

Positions 815-834 (DKQQASPSCPKNIKTPSQKI) are disordered. The span at 817–834 (QQASPSCPKNIKTPSQKI) shows a compositional bias: polar residues.

As to expression, highly expressed in colorectal and lung cancer tissues.

The protein resides in the cytoplasm. Its subcellular location is the nucleus. Its function is as follows. May be an anti-apoptotic protein involved in DNA repair or cell survival. In Homo sapiens (Human), this protein is DNA damage-induced apoptosis suppressor protein (DDIAS).